We begin with the raw amino-acid sequence, 185 residues long: MIETILLDAQERMGKCVDATKNQMAKVRTGRAHPSLLDSIQVSYYGAMSPLKQVANVGIEDSRTLSVTVFDRSMVQAVEKAIMTSDLGLNPMTAGATLRIPLPALTEERRKDFIKVVRNEAENGRIAIRNVRRDAISEVKKLEKAKECTEDDVRRSEDEVQKYTDAHIKNVDEVLTAKEKELMEV.

Belongs to the RRF family.

The protein localises to the cytoplasm. Functionally, responsible for the release of ribosomes from messenger RNA at the termination of protein biosynthesis. May increase the efficiency of translation by recycling ribosomes from one round of translation to another. The chain is Ribosome-recycling factor from Shewanella denitrificans (strain OS217 / ATCC BAA-1090 / DSM 15013).